The primary structure comprises 343 residues: Autoinducer 2 import system permease protein LsrC (343 aa).

9 helical membrane-spanning segments follow: residues 13–33 (FLAILALFGVLVALNPAYLSF), 38–58 (MIFASSQILILLALGAALVML), 61–81 (NIDVSVGSTVGLCAIAVGVAL), 92–112 (LFALAIGALAGAFNGLLVVGL), 114–134 (IPAIVATLGTLGLYRGAMLLW), 154–174 (VALGVSPLGMAVLFLVLIGAW), 212–232 (INGMLAACAGIVFASQIGFVP), 251–271 (GISLLGGTGTLIGAFLGAFFL), and 283–303 (LPAWWNDFIAGLVLLGVLVLD). The tract at residues 321–343 (RFQPGNKGGKHVTPFPKRKKEVA) is disordered.

Belongs to the binding-protein-dependent transport system permease family. AraH/RbsC subfamily. In terms of assembly, the complex is composed of two ATP-binding proteins (LsrA), two transmembrane proteins (LsrC and LsrD) and a solute-binding protein (LsrB).

It is found in the cell inner membrane. Its function is as follows. Part of the ABC transporter complex LsrABCD involved in autoinducer 2 (AI-2) import. Probably responsible for the translocation of the substrate across the membrane. The protein is Autoinducer 2 import system permease protein LsrC (lsrC) of Enterobacter sp. (strain 638).